The sequence spans 268 residues: Myeloid leukemia factor 1 (268 aa).

A phosphoserine mark is found at S8, S32, and S34. Disordered regions lie at residues 44-66 (ISDGRGRAHNRRGHNDGEDSLTH) and 209-268 (GRHN…SNKK). The tract at residues 50–125 (RAHNRRGHND…IGDEPPKVFQ (76 aa)) is interaction with COPS3. Basic and acidic residues-rich tracts occupy residues 56 to 65 (GHNDGEDSLT) and 226 to 237 (PGSRELKRREKP).

Belongs to the MLF family. In terms of assembly, interacts with CENPU. Also interacts with NRBP1/MADM, YWHAZ/14-3-3-zeta and HNRPUL2/MANP. NRBP1 recruits a serine kinase which phosphorylates both itself and MLF1. Phosphorylated MLF1 then binds to YWHAZ and is retained in the cytoplasm. Retained in the nucleus by binding to HNRPUL2. Binds to COPS3/CSN3 which is required for suppression of COP1 and activation of p53. Phosphorylation is required for binding to YWHAZ. In terms of tissue distribution, most abundant in testis, ovary, skeletal muscle, heart, kidney and colon. Low expression in spleen, thymus and peripheral blood leukocytes.

The protein resides in the cytoplasm. The protein localises to the nucleus. It is found in the cell projection. Its subcellular location is the cilium. It localises to the cytoskeleton. The protein resides in the cilium basal body. Its function is as follows. Involved in lineage commitment of primary hemopoietic progenitors by restricting erythroid formation and enhancing myeloid formation. Interferes with erythropoietin-induced erythroid terminal differentiation by preventing cells from exiting the cell cycle through suppression of CDKN1B/p27Kip1 levels. Suppresses COP1 activity via CSN3 which activates p53 and induces cell cycle arrest. Binds DNA and affects the expression of a number of genes so may function as a transcription factor in the nucleus. The protein is Myeloid leukemia factor 1 (MLF1) of Homo sapiens (Human).